Reading from the N-terminus, the 470-residue chain is MITKDVKEQLIQVSGPENFDDSNAGRLVYSYDATPQYQSMPDAVIAPRNTDEISRILTICSEHRVPIVPRGSGTNLCGGTCPTEGGLVLLFKHMNQILEIDEENLTATVQPGVITLDMIRAVESKGLFYPPDPSSMKISTIGGNINENSGGLRGLKYGVTRDYVIGLEVVLANGDIIRTGGKLAKDVAGYDLTRLFVGSEGTLGIVTEAIVKLVPKPETKKTLLALYENIDAAAQTVSDIIAAKIIPATLEFLDQPTLLVIEDYAKIGLPTSAKAVLLIEQDGPFETVERDMEKIEAICKKGDAVSVQTAQTEEEAFALTEARRSALSALARLKPTTILEDATVPRSEIANMVKAINDIAAKYDISICTFGHAGDGNLHPTCTTDIRNKDEMERVEQAFAEIFEKAIELGGTITGEHGVGEMKAPYLEMKLKKEGIDAMKALKAAFDPRNILNPGKMFAKDARKRVVAER.

Residues 37-216 form the FAD-binding PCMH-type domain; that stretch reads YQSMPDAVIA…TEAIVKLVPK (180 aa).

The protein belongs to the FAD-binding oxidoreductase/transferase type 4 family. As to quaternary structure, the glycolate oxidase likely consists of several subunits including GlcD and GlcF. The cofactor is FAD.

The protein resides in the cell membrane. The catalysed reaction is glycolate + A = glyoxylate + AH2. It catalyses the reaction (R)-lactate + A = pyruvate + AH2. Component of a complex that catalyzes the oxidation of glycolate to glyoxylate. Is also able to oxidize D-lactate ((R)-lactate). Does not link directly to O(2), and 2,6-dichloroindophenol (DCIP) and phenazine methosulfate (PMS) can act as artificial electron acceptors in vitro, but the physiological molecule that functions as primary electron acceptor during glycolate oxidation is unknown. The protein is Glycolate oxidase subunit GlcD (glcD) of Bacillus subtilis (strain 168).